We begin with the raw amino-acid sequence, 601 residues long: Dual specificity tyrosine-phosphorylation-regulated kinase 2 (601 aa).

The disordered stretch occupies residues methionine 1–valine 24. The residue at position 30 (serine 30) is a Phosphoserine. At threonine 106 the chain carries Phosphothreonine; by ATM. Positions lysine 189 to arginine 191 match the Nuclear localization signal motif. A Protein kinase domain is found at tyrosine 222–leucine 535. Residues isoleucine 228 to valine 236, lysine 251, and phenylalanine 301 to leucine 304 each bind ATP. Aspartate 348 serves as the catalytic Proton acceptor. Threonine 381 carries the post-translational modification Phosphothreonine; by MAP3K10. Tyrosine 382 carries the phosphotyrosine; by autocatalysis modification. Position 442 is a phosphoserine; by ATM (serine 442). Serine 449 bears the Phosphoserine; by MAP3K10 mark.

Belongs to the protein kinase superfamily. CMGC Ser/Thr protein kinase family. MNB/DYRK subfamily. In terms of assembly, component of an E3 ligase complex containing DYRK2, EDD/UBR5, DDB1 and DCAF1 (EDVP complex). Interacts directly with EDD/UBR5, DDB1 and DCAF1. Interacts with SIAH2 and MDM2. Interacts with MAP3K10 and NFATC1. May also interact with CCNL2. It depends on Mg(2+) as a cofactor. Mn(2+) serves as cofactor. Autophosphorylates cotranslationally on the second tyrosine residue in the Tyr-X-Tyr motif in the activation loop, but once mature, does not have any protein tyrosine kinase activity. Phosphorylated at Thr-106 and Ser-442 by ATM in response to genotoxic stress. Post-translationally, under normal conditions, polyubiquitinated in the nucleus by MDM2, leading to its proteasomal degradation. Phosphorylation on Thr-106 and Ser-442 by ATM in response to genotoxic stress disrupts MDM2 binding and prevents MDM2-mediated ubiquitination and subsequent proteasomal degradation. Polyubiquitinated by SIAH2, leading to its proteasomal degradation. Polyubiquitinated by SIAH2 occurs under normal conditions, and is enhanced in response to hypoxia. Testis, after the onset of spermatogenesis.

The protein localises to the cytoplasm. The protein resides in the nucleus. It carries out the reaction L-seryl-[protein] + ATP = O-phospho-L-seryl-[protein] + ADP + H(+). The enzyme catalyses L-threonyl-[protein] + ATP = O-phospho-L-threonyl-[protein] + ADP + H(+). The catalysed reaction is L-tyrosyl-[protein] + ATP = O-phospho-L-tyrosyl-[protein] + ADP + H(+). With respect to regulation, activated by autophosphorylation on the second tyrosine residue in the Tyr-X-Tyr motif in the activation loop. Inhibited by acridine analogs, purvalanol, and barely by harmine. Inhibited by leucettine and leucettine derivatives. Its function is as follows. Serine/threonine-protein kinase involved in the regulation of the mitotic cell cycle, cell proliferation, apoptosis, organization of the cytoskeleton and neurite outgrowth. Functions in part via its role in ubiquitin-dependent proteasomal protein degradation. Functions downstream of ATM and phosphorylates p53/TP53 at 'Ser-46', and thereby contributes to the induction of apoptosis in response to DNA damage. Phosphorylates NFATC1, and thereby inhibits its accumulation in the nucleus and its transcription factor activity. Phosphorylates EIF2B5 at 'Ser-544', enabling its subsequent phosphorylation and inhibition by GSK3B. Likewise, phosphorylation of NFATC1, CRMP2/DPYSL2 and CRMP4/DPYSL3 promotes their subsequent phosphorylation by GSK3B. May play a general role in the priming of GSK3 substrates. Inactivates GYS1 by phosphorylation at 'Ser-641', and potentially also a second phosphorylation site, thus regulating glycogen synthesis. Mediates EDVP E3 ligase complex formation and is required for the phosphorylation and subsequent degradation of KATNA1. Phosphorylates TERT at 'Ser-457', promoting TERT ubiquitination by the EDVP complex. Phosphorylates SIAH2, and thereby increases its ubiquitin ligase activity. Promotes the proteasomal degradation of MYC and JUN, and thereby regulates progress through the mitotic cell cycle and cell proliferation. Promotes proteasomal degradation of GLI2 and GLI3, and thereby plays a role in smoothened and sonic hedgehog signaling. Plays a role in cytoskeleton organization and neurite outgrowth via its phosphorylation of DCX and DPYSL2. Phosphorylates CRMP2/DPYSL2, CRMP4/DPYSL3, DCX, EIF2B5, EIF4EBP1, GLI2, GLI3, GYS1, JUN, MDM2, MYC, NFATC1, p53/TP53, TAU/MAPT and KATNA1. Can phosphorylate histone H1, histone H3 and histone H2B (in vitro). Can phosphorylate CARHSP1 (in vitro). In Homo sapiens (Human), this protein is Dual specificity tyrosine-phosphorylation-regulated kinase 2 (DYRK2).